We begin with the raw amino-acid sequence, 304 residues long: Meiotically up-regulated gene 86 protein (304 aa).

A compositionally biased stretch (low complexity) spans 1–12; sequence MSSNPSRSNSRS. A disordered region spans residues 1 to 23; the sequence is MSSNPSRSNSRSKNGDLESGLKF. The next 6 helical transmembrane spans lie at 93-113, 123-143, 150-170, 188-208, 212-232, and 247-267; these read PAPF…LFNV, MVTA…SMWE, FGGA…SIFI, AIGL…LCTV, LAFF…ACAF, and VGGA…MAGL.

The protein belongs to the acetate uptake transporter (AceTr) (TC 2.A.96) family.

It is found in the endoplasmic reticulum membrane. The protein resides in the golgi apparatus. Its subcellular location is the golgi stack membrane. The protein localises to the vacuole membrane. Its function is as follows. Has a role in meiosis. The protein is Meiotically up-regulated gene 86 protein (mug86) of Schizosaccharomyces pombe (strain 972 / ATCC 24843) (Fission yeast).